Reading from the N-terminus, the 507-residue chain is RNA demethylase ALKBH9B (507 aa).

2 disordered regions span residues 76–102 (GSER…DNHS) and 145–183 (QEDE…LSRD). Residues 89 to 100 (DEKSENGEDCDN) show a composition bias toward basic and acidic residues. A compositionally biased stretch (acidic residues) spans 145-160 (QEDEFDEEEEEEEEER). Over residues 174–183 (TPEKPKLSRD) the composition is skewed to basic and acidic residues. One can recognise a Fe2OG dioxygenase domain in the interval 317–414 (VPDSCIVNIY…RISITFRKMD (98 aa)). Histidine 335, aspartate 337, and histidine 396 together coordinate Fe cation. A 2-oxoglutarate-binding site is contributed by arginine 405. The disordered stretch occupies residues 432–507 (EPLPLDLNRS…MPRPSRRNYG (76 aa)). Residues 440 to 450 (RSGSTSRFSRL) show a composition bias toward polar residues. Residues 497 to 507 (GMPRPSRRNYG) show a composition bias toward basic residues.

The protein belongs to the alkB family. In terms of assembly, (Microbial infection) Interacts with the capsid protein ORF3b of the alfalfa mosaic virus (AMV). The cofactor is Fe(2+).

It is found in the cytoplasm. The protein resides in the P-body. Its subcellular location is the cytoplasmic granule. The enzyme catalyses an N(6)-methyladenosine in mRNA + 2-oxoglutarate + O2 = an adenosine in mRNA + formaldehyde + succinate + CO2. In terms of biological role, dioxygenase that demethylates RNA by oxidative demethylation: specifically demethylates N(6)-methyladenosine (m6A) RNA, the most prevalent internal modification of messenger RNA (mRNA) in higher eukaryotes. Modulates viral infection of the alfalfa mosaic virus (AMV) and the m6A abundance in its genomic RNAs. The polypeptide is RNA demethylase ALKBH9B (Arabidopsis thaliana (Mouse-ear cress)).